We begin with the raw amino-acid sequence, 53 residues long: ATP synthase protein 8 (53 aa).

Residues 9 to 29 (WLILFFIFSITLVIFNILNYF) traverse the membrane as a helical segment.

It belongs to the ATPase protein 8 family. As to quaternary structure, F-type ATPases have 2 components, CF(1) - the catalytic core - and CF(0) - the membrane proton channel.

It localises to the mitochondrion membrane. Mitochondrial membrane ATP synthase (F(1)F(0) ATP synthase or Complex V) produces ATP from ADP in the presence of a proton gradient across the membrane which is generated by electron transport complexes of the respiratory chain. F-type ATPases consist of two structural domains, F(1) - containing the extramembraneous catalytic core and F(0) - containing the membrane proton channel, linked together by a central stalk and a peripheral stalk. During catalysis, ATP synthesis in the catalytic domain of F(1) is coupled via a rotary mechanism of the central stalk subunits to proton translocation. Part of the complex F(0) domain. Minor subunit located with subunit a in the membrane. This is ATP synthase protein 8 (mt:ATPase8) from Anopheles quadrimaculatus (Common malaria mosquito).